The chain runs to 191 residues: Guanylate kinase (191 aa).

In terms of domain architecture, Guanylate kinase-like spans 10-188 (GQLIVLTGPS…ALHRLVKLIG (179 aa)). 17 to 24 (GPSGVGKG) lines the ATP pocket.

This sequence belongs to the guanylate kinase family.

Its subcellular location is the cytoplasm. The enzyme catalyses GMP + ATP = GDP + ADP. Functionally, essential for recycling GMP and indirectly, cGMP. The protein is Guanylate kinase (gmk) of Synechocystis sp. (strain ATCC 27184 / PCC 6803 / Kazusa).